We begin with the raw amino-acid sequence, 49 residues long: Large ribosomal subunit protein bL33 (49 aa).

This sequence belongs to the bacterial ribosomal protein bL33 family.

The sequence is that of Large ribosomal subunit protein bL33 from Lactobacillus acidophilus (strain ATCC 700396 / NCK56 / N2 / NCFM).